Consider the following 392-residue polypeptide: MNIHEYQGKEILRGFGVTVPKGIVAFSAEEAKKAAETLLTEQGGGVVVVKAQIHAGGRGKAGGVKLVRSADEAFEVATQMIGTTLVTHQTGPEGKEVRRLLVEEGMNIEKELYLGITLDRATSCNVLMVSTEGGMEIEKVAEETPEKLLKIQIHPTLGLQPNQAREAAFFLGLEGEQFKNAVKFISALYNAYMKADCSLAEINPLVVTKEGRVIALDAKINFDDNALFRHKDYIDLRDTSEEDPLEVEASKSNLNYVRLDGNVGCMVNGAGLAMGTMDMIQLAGGKPANFLDVGGGANPQTVQEGFRIILTDPNVKAILVNIFGGIVRCDRVAGGVIEAAKNIDIHVPVIVRLEGTNADIAQKMLDESGLNLVSAKGLSDAAKKVNEALAAA.

Positions 9-248 (KEILRGFGVT…TSEEDPLEVE (240 aa)) constitute an ATP-grasp domain. Residues lysine 50, 57–59 (GRG), glutamate 103, methionine 106, and glutamate 111 contribute to the ATP site. Positions 203 and 217 each coordinate Mg(2+). Residues asparagine 268 and 325–327 (GIV) contribute to the substrate site.

This sequence belongs to the succinate/malate CoA ligase beta subunit family. As to quaternary structure, heterotetramer of two alpha and two beta subunits. Mg(2+) serves as cofactor.

It catalyses the reaction succinate + ATP + CoA = succinyl-CoA + ADP + phosphate. The enzyme catalyses GTP + succinate + CoA = succinyl-CoA + GDP + phosphate. It functions in the pathway carbohydrate metabolism; tricarboxylic acid cycle; succinate from succinyl-CoA (ligase route): step 1/1. Succinyl-CoA synthetase functions in the citric acid cycle (TCA), coupling the hydrolysis of succinyl-CoA to the synthesis of either ATP or GTP and thus represents the only step of substrate-level phosphorylation in the TCA. The beta subunit provides nucleotide specificity of the enzyme and binds the substrate succinate, while the binding sites for coenzyme A and phosphate are found in the alpha subunit. This is Succinate--CoA ligase [ADP-forming] subunit beta from Chloroherpeton thalassium (strain ATCC 35110 / GB-78).